A 366-amino-acid polypeptide reads, in one-letter code: 3-dehydroquinate synthase (366 aa).

NAD(+) is bound by residues 69–74 (DGEAHK), 103–107 (GVIGD), 127–128 (TT), K140, K149, and 167–170 (TLNT). 3 residues coordinate Zn(2+): E182, H245, and H262.

It belongs to the sugar phosphate cyclases superfamily. Dehydroquinate synthase family. It depends on Co(2+) as a cofactor. The cofactor is Zn(2+). Requires NAD(+) as cofactor.

The protein localises to the cytoplasm. The catalysed reaction is 7-phospho-2-dehydro-3-deoxy-D-arabino-heptonate = 3-dehydroquinate + phosphate. It functions in the pathway metabolic intermediate biosynthesis; chorismate biosynthesis; chorismate from D-erythrose 4-phosphate and phosphoenolpyruvate: step 2/7. Catalyzes the conversion of 3-deoxy-D-arabino-heptulosonate 7-phosphate (DAHP) to dehydroquinate (DHQ). The protein is 3-dehydroquinate synthase of Pseudomonas fluorescens (strain SBW25).